Consider the following 255-residue polypeptide: Large ribosomal subunit protein eL8 (255 aa).

The span at 1–16 (MPKAPKKITKPKKAEK) shows a compositional bias: basic residues. The segment at 1-28 (MPKAPKKITKPKKAEKKKNPLFQAKPRS) is disordered.

This sequence belongs to the eukaryotic ribosomal protein eL8 family.

The sequence is that of Large ribosomal subunit protein eL8 (RPL7A) from Tetrahymena thermophila.